Reading from the N-terminus, the 397-residue chain is Probable peptidoglycan glycosyltransferase FtsW (397 aa).

The Cytoplasmic portion of the chain corresponds to 1–26 (MSPRNSALERFRQHQKIPEKRWQRLA). The helical transmembrane segment at 27–47 (FPDVGLLLCWLALIVIGMVMV) threads the bilayer. The Periplasmic segment spans residues 48-69 (TSSSLSEAHVERLSTHHFAIRQ). The helical transmembrane segment at 70–90 (GIFYVGSSIFAYIAFMLGTNF) threads the bilayer. The Cytoplasmic segment spans residues 91-96 (YREKAK). Residues 97–117 (FILGLAFLGLLLVYAPGIGVV) traverse the membrane as a helical segment. The Periplasmic segment spans residues 118-126 (VNGSRRWLN). Residues 127-147 (LGVINLQVGEFAKLAVFIFTA) traverse the membrane as a helical segment. Residues 148-159 (AYLQHHTQRLDH) lie on the Cytoplasmic side of the membrane. A helical membrane pass occupies residues 160 to 180 (SWQPIIGLLAVTACFALMFYL). The Periplasmic segment spans residues 181 to 185 (QPDFG). Residues 186–206 (TMVVIVATVLGMLFLSGVSIW) traverse the membrane as a helical segment. A topological domain (cytoplasmic) is located at residue Arg-207. A helical membrane pass occupies residues 208-228 (LLLLGVLIAPAMVWVLISESY). At 229–294 (RLRRLTTFIN…IFSIIAEETG (66 aa)) the chain is on the periplasmic side. The helical transmembrane segment at 295–315 (LVGALIVMAILMILVWRAFAI) threads the bilayer. Residues 316–328 (GYLADRMRKRFSS) lie on the Cytoplasmic side of the membrane. A helical membrane pass occupies residues 329-349 (LLAYGIGLWLGLQSLINIGVT). At 350–359 (TGALPTKGLT) the chain is on the periplasmic side. A helical membrane pass occupies residues 360-380 (LPLISYGGSSILMTSIALAIL). Topologically, residues 381–397 (ARIDAESRFIARLEGKI) are cytoplasmic.

The protein belongs to the SEDS family. FtsW subfamily.

The protein localises to the cell inner membrane. It catalyses the reaction [GlcNAc-(1-&gt;4)-Mur2Ac(oyl-L-Ala-gamma-D-Glu-L-Lys-D-Ala-D-Ala)](n)-di-trans,octa-cis-undecaprenyl diphosphate + beta-D-GlcNAc-(1-&gt;4)-Mur2Ac(oyl-L-Ala-gamma-D-Glu-L-Lys-D-Ala-D-Ala)-di-trans,octa-cis-undecaprenyl diphosphate = [GlcNAc-(1-&gt;4)-Mur2Ac(oyl-L-Ala-gamma-D-Glu-L-Lys-D-Ala-D-Ala)](n+1)-di-trans,octa-cis-undecaprenyl diphosphate + di-trans,octa-cis-undecaprenyl diphosphate + H(+). The protein operates within cell wall biogenesis; peptidoglycan biosynthesis. Peptidoglycan polymerase that is essential for cell division. This chain is Probable peptidoglycan glycosyltransferase FtsW, found in Dichelobacter nodosus (strain VCS1703A).